A 243-amino-acid chain; its full sequence is Orotidine 5'-phosphate decarboxylase (243 aa).

Residues Asp-16, Lys-38, 65–74 (DLKLHDIPNT), Thr-120, Arg-181, Gln-190, Gly-210, and Arg-211 contribute to the substrate site. Lys-67 (proton donor) is an active-site residue.

Belongs to the OMP decarboxylase family. Type 1 subfamily. As to quaternary structure, homodimer.

The enzyme catalyses orotidine 5'-phosphate + H(+) = UMP + CO2. The protein operates within pyrimidine metabolism; UMP biosynthesis via de novo pathway; UMP from orotate: step 2/2. Its function is as follows. Catalyzes the decarboxylation of orotidine 5'-monophosphate (OMP) to uridine 5'-monophosphate (UMP). This chain is Orotidine 5'-phosphate decarboxylase, found in Bradyrhizobium sp. (strain BTAi1 / ATCC BAA-1182).